Consider the following 343-residue polypeptide: Pseudaminic acid synthase (343 aa).

Residues 287–343 form the AFP-like domain; it reads SLYASKDIKKGEMFSEENVKSVRPSFGLHPKFYQELLGKKASKDIKFGDALKQGDFQ.

Belongs to the pseudaminic acid synthase family. Requires a divalent metal cation as cofactor.

The enzyme catalyses 2,4-diacetamido-2,4,6-trideoxy-beta-L-altrose + phosphoenolpyruvate + H2O = pseudaminate + phosphate. Its function is as follows. Catalyzes the fifth step in the biosynthesis of pseudaminic acid, a sialic-acid-like sugar that is used to modify flagellin. Catalyzes the condensation of phosphoenolpyruvate with 2,4-diacetamido-2,4,6-trideoxy-beta-l-altropyranose, forming pseudaminic acid. The sequence is that of Pseudaminic acid synthase (pseI) from Campylobacter jejuni subsp. jejuni serotype O:2 (strain ATCC 700819 / NCTC 11168).